The primary structure comprises 292 residues: Mitochondrial fission regulator 1-like (292 aa).

The residue at position 30 (Thr-30) is a Phosphothreonine. Ser-41 is modified (phosphoserine). Phosphoserine; by AMPK is present on Ser-103. Ser-110, Ser-224, and Ser-225 each carry phosphoserine. Ser-238 is modified (phosphoserine; by AMPK). Residues Ser-261 and Ser-273 each carry the phosphoserine modification.

This sequence belongs to the MTFR1 family. Post-translationally, phosphorylated by AMPK. Upon stress, phosphorylation at Ser-103 and Ser-238 by AMPK is sufficient to induce mitochondrial fragmentation.

The protein localises to the mitochondrion outer membrane. Its function is as follows. Mitochondrial protein required for adaptation of miochondrial dynamics to metabolic changes. Regulates mitochondrial morphology at steady state and mediates AMPK-dependent stress-induced mitochondrial fragmentation via the control of OPA1 levels. The sequence is that of Mitochondrial fission regulator 1-like from Homo sapiens (Human).